We begin with the raw amino-acid sequence, 150 residues long: Large ribosomal subunit protein uL15 (150 aa).

It belongs to the universal ribosomal protein uL15 family. Part of the 50S ribosomal subunit.

Binds to the 23S rRNA. The chain is Large ribosomal subunit protein uL15 from Rickettsia typhi (strain ATCC VR-144 / Wilmington).